A 590-amino-acid chain; its full sequence is DNA primase (590 aa).

A CHC2-type zinc finger spans residues 37 to 61 (CPFHKEKTPSFSVSPTKQFYHCFSC). The Toprim domain maps to 255 to 337 (GRILVVEGYM…DKSLHFLFLP (83 aa)). Residues Glu261, Asp305, and Asp307 each contribute to the Mg(2+) site.

This sequence belongs to the DnaG primase family. In terms of assembly, monomer. Interacts with DnaB. The cofactor is Zn(2+). Requires Mg(2+) as cofactor.

It catalyses the reaction ssDNA + n NTP = ssDNA/pppN(pN)n-1 hybrid + (n-1) diphosphate.. In terms of biological role, RNA polymerase that catalyzes the synthesis of short RNA molecules used as primers for DNA polymerase during DNA replication. This chain is DNA primase, found in Neisseria meningitidis serogroup B (strain ATCC BAA-335 / MC58).